A 340-amino-acid polypeptide reads, in one-letter code: Methionine import ATP-binding protein MetN (340 aa).

Residues 8–246 (ISVKNLNKEI…PYSSITEELF (239 aa)) form the ABC transporter domain. 40 to 47 (GHSGSGKS) lines the ATP pocket.

It belongs to the ABC transporter superfamily. Methionine importer (TC 3.A.1.24) family. As to quaternary structure, the complex is composed of two ATP-binding proteins (MetN), two transmembrane proteins (MetI) and a solute-binding protein (MetQ).

The protein localises to the cell inner membrane. It catalyses the reaction L-methionine(out) + ATP + H2O = L-methionine(in) + ADP + phosphate + H(+). The enzyme catalyses D-methionine(out) + ATP + H2O = D-methionine(in) + ADP + phosphate + H(+). Part of the ABC transporter complex MetNIQ involved in methionine import. Responsible for energy coupling to the transport system. The sequence is that of Methionine import ATP-binding protein MetN from Chlamydia felis (strain Fe/C-56) (Chlamydophila felis).